Reading from the N-terminus, the 20-residue chain is Equinatoxin-3 (20 aa).

The interval 3 to 12 (AVAGAIIKGA) is plays an important role in the hemolytic activity. The segment at 11 to 20 (GAALTFNVLQ) is N-terminal region.

Belongs to the actinoporin family. Sea anemone subfamily. As to quaternary structure, octamer or nonamer in membranes. Monomer in the soluble state.

The protein resides in the secreted. The protein localises to the nematocyst. It is found in the target cell membrane. In terms of biological role, pore-forming protein that forms cations-selective hydrophilic pores of around 1 nm and causes cardiac stimulation and cytolysis. Pore formation is a multi-step process that involves specific recognition of membrane sphingomyelin (but neither cholesterol nor phosphatidylcholine) using aromatic rich region and adjacent phosphocholine (POC) binding site, firm binding to the membrane (mainly driven by hydrophobic interactions) accompanied by the transfer of the N-terminal region to the lipid-water interface and finally pore formation after oligomerization of monomers. Cytolytic effects include red blood cells hemolysis, platelet aggregation and lysis, cytotoxic and cytostatic effects on fibroblasts. Lethality in mammals has been ascribed to severe vasospasm of coronary vessels, cardiac arrhythmia, and inotropic effects. The polypeptide is Equinatoxin-3 (Actinia equina (Beadlet anemone)).